We begin with the raw amino-acid sequence, 215 residues long: Histone H1.1 (215 aa).

The segment at 1–43 (MSETVPPAPAASAAPEKPLAGKKAKKPAKAAAASKKKPAGPSV) is disordered. S2 carries the post-translational modification N-acetylserine. 2 positions are modified to phosphoserine: S2 and S12. K17 bears the N6-acetyllysine mark. Basic residues predominate over residues 20-38 (AGKKAKKPAKAAAASKKKP). The residue at position 37 (K37) is an N6-(beta-hydroxybutyryl)lysine. In terms of domain architecture, H15 spans 39–112 (AGPSVSELIV…GASGSFKLNK (74 aa)). S44 carries the phosphoserine modification. An N6-(beta-hydroxybutyryl)lysine modification is found at K55. R57 is modified (citrulline). At K67 the chain carries N6-(beta-hydroxybutyryl)lysine. K78 is modified (N6-acetyllysine). K88 carries the N6-(beta-hydroxybutyryl)lysine modification. N6-(beta-hydroxybutyryl)lysine; alternate is present on K93. K93 carries the post-translational modification N6-acetyllysine; alternate. A disordered region spans residues 94 to 215 (GTLVQTKGTG…KPKKAAPKKK (122 aa)). S107 carries the post-translational modification Phosphoserine. Position 109 is an N6-(beta-hydroxybutyryl)lysine (K109). Residues 122 to 147 (GASKVATKTKATGASKKLKKATGASK) show a composition bias toward low complexity. K125 bears the N6-acetyllysine mark. 2 stretches are compositionally biased toward basic residues: residues 148 to 181 (KSVK…KKVA) and 188 to 215 (KAVK…PKKK). At T204 the chain carries Phosphothreonine.

It belongs to the histone H1/H5 family. In terms of assembly, interacts with DFFB. In terms of processing, H1 histones are progressively phosphorylated during the cell cycle, becoming maximally phosphorylated during late G2 phase and M phase, and being dephosphorylated sharply thereafter. Post-translationally, citrullination at Arg-57 (H1R54ci) by PADI4 takes place within the DNA-binding site of H1 and results in its displacement from chromatin and global chromatin decondensation, thereby promoting pluripotency and stem cell maintenance.

The protein localises to the nucleus. The protein resides in the chromosome. Functionally, histone H1 protein binds to linker DNA between nucleosomes forming the macromolecular structure known as the chromatin fiber. Histones H1 are necessary for the condensation of nucleosome chains into higher-order structured fibers. Also acts as a regulator of individual gene transcription through chromatin remodeling, nucleosome spacing and DNA methylation. In Homo sapiens (Human), this protein is Histone H1.1.